Consider the following 236-residue polypeptide: MEKREELYRGKAKSVYKTDDADRLILLFRNDTSAFDGKRIEQLDRKGMVNNKFNAFIMQKLEEAGIPTQFDKLLGDNECLVKKLDMIPVECVVRNYAAGSLVKRLGIEEGTRLNPYTFELFLKDDAKGDPFINESHVVAFGWGTAEQLARMKELSIKVNDVLTKLFDDAGLLLVDFKLEFGVFHGEIVLGDEFSPDGCRLWDKDTRKKMDKDRFRQGLGDVIEAYEEVANRLGVPL.

The protein belongs to the SAICAR synthetase family.

It catalyses the reaction 5-amino-1-(5-phospho-D-ribosyl)imidazole-4-carboxylate + L-aspartate + ATP = (2S)-2-[5-amino-1-(5-phospho-beta-D-ribosyl)imidazole-4-carboxamido]succinate + ADP + phosphate + 2 H(+). The protein operates within purine metabolism; IMP biosynthesis via de novo pathway; 5-amino-1-(5-phospho-D-ribosyl)imidazole-4-carboxamide from 5-amino-1-(5-phospho-D-ribosyl)imidazole-4-carboxylate: step 1/2. The chain is Phosphoribosylaminoimidazole-succinocarboxamide synthase from Pseudomonas syringae pv. syringae (strain B728a).